Here is a 294-residue protein sequence, read N- to C-terminus: Homeobox protein Nkx-2.5 (294 aa).

Disordered stretches follow at residues 48–69 (GSEPPALPELPEPPPAKPPAAF) and 102–122 (EQEKRELEDPERPRQRKRRKP). A compositionally biased stretch (pro residues) spans 52-69 (PALPELPEPPPAKPPAAF). Basic and acidic residues predominate over residues 102–114 (EQEKRELEDPERP). A DNA-binding region (homeobox) is located at residues 119-178 (RRKPRVLFSQAQVYELERRFKQQKYLSAPERDHLANVLKLTSTQVKIWFQNRRYKCKRQR).

This sequence belongs to the NK-2 homeobox family. As to quaternary structure, homodimer (via the homeobox); binds DNA as homodimer.

Its subcellular location is the nucleus. In terms of biological role, transcription factor required for the development of the heart and the spleen. Implicated in commitment to and/or differentiation of the myocardial lineage. Binds to the core DNA motif of promoter. The protein is Homeobox protein Nkx-2.5 (NKX-2.5) of Gallus gallus (Chicken).